The sequence spans 332 residues: Small ribosomal subunit protein uS2 (332 aa).

The protein belongs to the universal ribosomal protein uS2 family.

This is Small ribosomal subunit protein uS2 from Nitrobacter winogradskyi (strain ATCC 25391 / DSM 10237 / CIP 104748 / NCIMB 11846 / Nb-255).